The chain runs to 292 residues: Ephrin type-A receptor 4a (292 aa).

Residues 1-9 (IGIGEFGEV) and Lys-27 contribute to the ATP site. The region spanning 1-265 (IGIGEFGEVC…QIVNMLDKLI (265 aa)) is the Protein kinase domain. The active-site Proton acceptor is the Asp-120. Tyr-153 carries the post-translational modification Phosphotyrosine; by autocatalysis.

The protein belongs to the protein kinase superfamily. Tyr protein kinase family. Ephrin receptor subfamily. Widely expressed in the developing nervous system.

The protein localises to the cell membrane. It localises to the early endosome. It catalyses the reaction L-tyrosyl-[protein] + ATP = O-phospho-L-tyrosyl-[protein] + ADP + H(+). In terms of biological role, receptor tyrosine kinase which binds membrane-bound ephrin family ligands residing on adjacent cells, leading to contact-dependent bidirectional signaling into neighboring cells. The signaling pathway downstream of the receptor is referred to as forward signaling while the signaling pathway downstream of the ephrin ligand is referred to as reverse signaling. Highly promiscuous, it has the unique property among Eph receptors to bind and to be physiologically activated by both GPI-anchored ephrin-A and transmembrane ephrin-B ligands including efna1 and efnb3. Upon activation by ephrin ligands, modulates cell morphology and integrin-dependent cell adhesion through regulation of the Rac, Rap and Rho GTPases activity. Plays an important role in the development of the nervous system controlling different steps of axonal guidance including the establishment of the corticospinal projections. This Danio rerio (Zebrafish) protein is Ephrin type-A receptor 4a (epha4a).